Here is a 153-residue protein sequence, read N- to C-terminus: Phosphopantetheine adenylyltransferase (153 aa).

Substrate is bound at residue serine 11. ATP contacts are provided by residues 11 to 12 and histidine 19; that span reads SF. Substrate contacts are provided by lysine 43, threonine 75, and arginine 89. Residues 90–92, glutamate 100, and 124–130 contribute to the ATP site; these read GIR and LSFISSS.

The protein belongs to the bacterial CoaD family. As to quaternary structure, homohexamer. Mg(2+) serves as cofactor.

The protein localises to the cytoplasm. It catalyses the reaction (R)-4'-phosphopantetheine + ATP + H(+) = 3'-dephospho-CoA + diphosphate. Its pathway is cofactor biosynthesis; coenzyme A biosynthesis; CoA from (R)-pantothenate: step 4/5. In terms of biological role, reversibly transfers an adenylyl group from ATP to 4'-phosphopantetheine, yielding dephospho-CoA (dPCoA) and pyrophosphate. In Porphyromonas gingivalis (strain ATCC 33277 / DSM 20709 / CIP 103683 / JCM 12257 / NCTC 11834 / 2561), this protein is Phosphopantetheine adenylyltransferase.